Reading from the N-terminus, the 417-residue chain is GTP-binding protein YPT11 (417 aa).

The disordered stretch occupies residues 1–34 (MSQRKRYSLNVVTSPSIPSPTPSAPIRTNESNWE). GTP contacts are provided by residues 97–104 (GDANVGKT), 228–232 (DTAGQ), and 292–295 (NKID). Residues C415 and C416 are each lipidated (S-geranylgeranyl cysteine).

Belongs to the small GTPase superfamily. Rab family. Interacts with MYO2 (via C-terminal tail domain). Interacts with YIF1, YIP3, YIP4 and YIP5.

It is found in the endoplasmic reticulum membrane. The protein resides in the bud tip. The protein localises to the bud neck. Its function is as follows. Involved in the positive control of both endoplasmic reticulum (ER) and mitochondrion inheritance during cell divison. Required for the MYO2-dependent retention of newly inherited mitochondria at the bud tip in developing daughter cells. The polypeptide is GTP-binding protein YPT11 (YPT11) (Saccharomyces cerevisiae (strain RM11-1a) (Baker's yeast)).